Reading from the N-terminus, the 905-residue chain is DNA gyrase subunit A (905 aa).

In terms of domain architecture, Topo IIA-type catalytic spans 35-524 (IPDVRDGLKP…GEFDQDIEDL (490 aa)). Tyr123 serves as the catalytic O-(5'-phospho-DNA)-tyrosine intermediate. The short motif at 551-557 (QKRGGKG) is the GyrA-box element. The disordered stretch occupies residues 885-905 (TAESEEDSELEEEGLEQSEEV). Over residues 886–905 (AESEEDSELEEEGLEQSEEV) the composition is skewed to acidic residues.

It belongs to the type II topoisomerase GyrA/ParC subunit family. As to quaternary structure, heterotetramer, composed of two GyrA and two GyrB chains. In the heterotetramer, GyrA contains the active site tyrosine that forms a transient covalent intermediate with DNA, while GyrB binds cofactors and catalyzes ATP hydrolysis.

The protein resides in the cytoplasm. The catalysed reaction is ATP-dependent breakage, passage and rejoining of double-stranded DNA.. Its function is as follows. A type II topoisomerase that negatively supercoils closed circular double-stranded (ds) DNA in an ATP-dependent manner to modulate DNA topology and maintain chromosomes in an underwound state. Negative supercoiling favors strand separation, and DNA replication, transcription, recombination and repair, all of which involve strand separation. Also able to catalyze the interconversion of other topological isomers of dsDNA rings, including catenanes and knotted rings. Type II topoisomerases break and join 2 DNA strands simultaneously in an ATP-dependent manner. In Rickettsia conorii (strain ATCC VR-613 / Malish 7), this protein is DNA gyrase subunit A.